A 184-amino-acid chain; its full sequence is uncharacterized protein (184 aa).

This sequence to M.tuberculosis Rv0487.

This is an uncharacterized protein from Mycobacterium leprae (strain TN).